A 108-amino-acid polypeptide reads, in one-letter code: Nucleoid-associated protein Bpet3552 (108 aa).

It belongs to the YbaB/EbfC family. Homodimer.

It is found in the cytoplasm. Its subcellular location is the nucleoid. In terms of biological role, binds to DNA and alters its conformation. May be involved in regulation of gene expression, nucleoid organization and DNA protection. The polypeptide is Nucleoid-associated protein Bpet3552 (Bordetella petrii (strain ATCC BAA-461 / DSM 12804 / CCUG 43448)).